Reading from the N-terminus, the 226-residue chain is Ribosomal RNA small subunit methyltransferase G (226 aa).

Residues Gly-86, Leu-91, 137 to 138 (VE), and Arg-150 contribute to the S-adenosyl-L-methionine site.

It belongs to the methyltransferase superfamily. RNA methyltransferase RsmG family.

It is found in the cytoplasm. The catalysed reaction is guanosine(527) in 16S rRNA + S-adenosyl-L-methionine = N(7)-methylguanosine(527) in 16S rRNA + S-adenosyl-L-homocysteine. Functionally, specifically methylates the N7 position of guanine in position 527 of 16S rRNA. This is Ribosomal RNA small subunit methyltransferase G from Polaromonas sp. (strain JS666 / ATCC BAA-500).